Reading from the N-terminus, the 360-residue chain is UDP-N-acetylglucosamine--N-acetylmuramyl-(pentapeptide) pyrophosphoryl-undecaprenol N-acetylglucosamine transferase (360 aa).

UDP-N-acetyl-alpha-D-glucosamine is bound by residues 12-14 (TAG), Ser198, and Gln289.

Belongs to the glycosyltransferase 28 family. MurG subfamily.

The protein localises to the cell membrane. The catalysed reaction is Mur2Ac(oyl-L-Ala-gamma-D-Glu-L-Lys-D-Ala-D-Ala)-di-trans,octa-cis-undecaprenyl diphosphate + UDP-N-acetyl-alpha-D-glucosamine = beta-D-GlcNAc-(1-&gt;4)-Mur2Ac(oyl-L-Ala-gamma-D-Glu-L-Lys-D-Ala-D-Ala)-di-trans,octa-cis-undecaprenyl diphosphate + UDP + H(+). The protein operates within cell wall biogenesis; peptidoglycan biosynthesis. In terms of biological role, cell wall formation. Catalyzes the transfer of a GlcNAc subunit on undecaprenyl-pyrophosphoryl-MurNAc-pentapeptide (lipid intermediate I) to form undecaprenyl-pyrophosphoryl-MurNAc-(pentapeptide)GlcNAc (lipid intermediate II). This Streptococcus equi subsp. zooepidemicus (strain H70) protein is UDP-N-acetylglucosamine--N-acetylmuramyl-(pentapeptide) pyrophosphoryl-undecaprenol N-acetylglucosamine transferase.